Reading from the N-terminus, the 231-residue chain is 7-cyano-7-deazaguanine synthase (231 aa).

F8–L18 serves as a coordination point for ATP. Zn(2+) contacts are provided by C188, C197, C200, and C203.

The protein belongs to the QueC family. Requires Zn(2+) as cofactor.

It catalyses the reaction 7-carboxy-7-deazaguanine + NH4(+) + ATP = 7-cyano-7-deazaguanine + ADP + phosphate + H2O + H(+). It functions in the pathway purine metabolism; 7-cyano-7-deazaguanine biosynthesis. In terms of biological role, catalyzes the ATP-dependent conversion of 7-carboxy-7-deazaguanine (CDG) to 7-cyano-7-deazaguanine (preQ(0)). The protein is 7-cyano-7-deazaguanine synthase of Salmonella arizonae (strain ATCC BAA-731 / CDC346-86 / RSK2980).